Here is a 354-residue protein sequence, read N- to C-terminus: UDP-3-O-acylglucosamine N-acyltransferase (354 aa).

His257 (proton acceptor) is an active-site residue.

The protein belongs to the transferase hexapeptide repeat family. LpxD subfamily. In terms of assembly, homotrimer.

It carries out the reaction a UDP-3-O-[(3R)-3-hydroxyacyl]-alpha-D-glucosamine + a (3R)-hydroxyacyl-[ACP] = a UDP-2-N,3-O-bis[(3R)-3-hydroxyacyl]-alpha-D-glucosamine + holo-[ACP] + H(+). Its pathway is bacterial outer membrane biogenesis; LPS lipid A biosynthesis. In terms of biological role, catalyzes the N-acylation of UDP-3-O-acylglucosamine using 3-hydroxyacyl-ACP as the acyl donor. Is involved in the biosynthesis of lipid A, a phosphorylated glycolipid that anchors the lipopolysaccharide to the outer membrane of the cell. In Rhizobium johnstonii (strain DSM 114642 / LMG 32736 / 3841) (Rhizobium leguminosarum bv. viciae), this protein is UDP-3-O-acylglucosamine N-acyltransferase.